We begin with the raw amino-acid sequence, 216 residues long: Inorganic pyrophosphatase (216 aa).

The substrate site is built by lysine 39, arginine 53, and tyrosine 65. Mg(2+) contacts are provided by aspartate 93, aspartate 98, and aspartate 131. Substrate is bound at residue tyrosine 168.

It belongs to the PPase family. As to quaternary structure, homohexamer. Requires Mg(2+) as cofactor.

The protein localises to the cytoplasm. The enzyme catalyses diphosphate + H2O = 2 phosphate + H(+). In terms of biological role, catalyzes the hydrolysis of inorganic pyrophosphate (PPi) forming two phosphate ions. In Chlamydia caviae (strain ATCC VR-813 / DSM 19441 / 03DC25 / GPIC) (Chlamydophila caviae), this protein is Inorganic pyrophosphatase.